Here is a 142-residue protein sequence, read N- to C-terminus: Large-conductance mechanosensitive channel (142 aa).

The next 3 helical transmembrane spans lie at 10-30 (FAVK…GAFG), 40-60 (LIMP…LFIV), and 86-106 (GNFI…FVMV).

Belongs to the MscL family. As to quaternary structure, homopentamer.

The protein localises to the cell inner membrane. Channel that opens in response to stretch forces in the membrane lipid bilayer. May participate in the regulation of osmotic pressure changes within the cell. The polypeptide is Large-conductance mechanosensitive channel (Acidovorax ebreus (strain TPSY) (Diaphorobacter sp. (strain TPSY))).